A 463-amino-acid polypeptide reads, in one-letter code: tRNA-2-methylthio-N(6)-dimethylallyladenosine synthase (463 aa).

An MTTase N-terminal domain is found at 5–125 (RKLHIKSYGC…LPQLLAKAEQ (121 aa)). Residues C14, C50, C88, C166, C170, and C173 each contribute to the [4Fe-4S] cluster site. The Radical SAM core domain occupies 152-384 (RARGISAFVT…QQLIDQQQSA (233 aa)). A TRAM domain is found at 387-449 (KAAIGRTVEV…RYSLLGELAS (63 aa)).

The protein belongs to the methylthiotransferase family. MiaB subfamily. In terms of assembly, monomer. [4Fe-4S] cluster is required as a cofactor.

The protein localises to the cytoplasm. The enzyme catalyses N(6)-dimethylallyladenosine(37) in tRNA + (sulfur carrier)-SH + AH2 + 2 S-adenosyl-L-methionine = 2-methylsulfanyl-N(6)-dimethylallyladenosine(37) in tRNA + (sulfur carrier)-H + 5'-deoxyadenosine + L-methionine + A + S-adenosyl-L-homocysteine + 2 H(+). Functionally, catalyzes the methylthiolation of N6-(dimethylallyl)adenosine (i(6)A), leading to the formation of 2-methylthio-N6-(dimethylallyl)adenosine (ms(2)i(6)A) at position 37 in tRNAs that read codons beginning with uridine. This Rhodopseudomonas palustris (strain ATCC BAA-98 / CGA009) protein is tRNA-2-methylthio-N(6)-dimethylallyladenosine synthase.